Reading from the N-terminus, the 142-residue chain is MAKKITRIAKLEFMAMQAKPGAELASLGINMPAFTREFNDATKDRAGDVVPVVITAYDDKSFDFVLKTTPAAYMLKKVAKIEKGASNSKTQTVATVTLDDIRSIAEYKMPDLNANTIEAAMKQIIGTAKNMGIKVTGMEDFK.

Belongs to the universal ribosomal protein uL11 family. As to quaternary structure, part of the ribosomal stalk of the 50S ribosomal subunit. Interacts with L10 and the large rRNA to form the base of the stalk. L10 forms an elongated spine to which L12 dimers bind in a sequential fashion forming a multimeric L10(L12)X complex. In terms of processing, one or more lysine residues are methylated.

In terms of biological role, forms part of the ribosomal stalk which helps the ribosome interact with GTP-bound translation factors. This chain is Large ribosomal subunit protein uL11, found in Mycoplasma capricolum subsp. capricolum (strain California kid / ATCC 27343 / NCTC 10154).